We begin with the raw amino-acid sequence, 355 residues long: Probable nitronate monooxygenase (355 aa).

Residues Asn71, Gln175, Gly180, Gly218, and 237 to 240 (QMGT) contribute to the FMN site.

This sequence belongs to the nitronate monooxygenase family. NMO class I subfamily. It depends on FMN as a cofactor.

The enzyme catalyses 3 propionate 3-nitronate + 3 O2 + H2O = 3 3-oxopropanoate + 2 nitrate + nitrite + H2O2 + 3 H(+). Nitronate monooxygenase that uses molecular oxygen to catalyze the oxidative denitrification of alkyl nitronates. Acts on propionate 3-nitronate (P3N), the presumed physiological substrate. Probably functions in the detoxification of P3N, a metabolic poison produced by plants and fungi as a defense mechanism. The chain is Probable nitronate monooxygenase from Staphylococcus aureus (strain MRSA252).